We begin with the raw amino-acid sequence, 199 residues long: Transmembrane protein 223 (199 aa).

The Mitochondrial matrix portion of the chain corresponds to 1 to 43 (MVASVPLRNVSHLLSVLRSQNVPRYLQNGVPRDVLLFRHERGR). Residues 44–64 (FFAILGLFCAGQGIFWTSLAV) traverse the membrane as a helical segment. At 65-94 (AALSRPLSRVPAEAPNRSYQDLRSALWRYG) the chain is on the mitochondrial intermembrane side. A helical membrane pass occupies residues 95 to 115 (LAVGCGTMGVLVLGAGLLYSL). Over 116–199 (RSVRSVMLLA…DNTVGAYRSL (84 aa)) the chain is Mitochondrial matrix.

The protein belongs to the TMEM223 family. Associates with the mitochondrial ribosome.

The protein localises to the mitochondrion inner membrane. Mitochondrial ribosome-associated protein involved in the first steps of cytochrome c oxidase complex (complex IV) biogenesis. Stimulates the translation of MT-CO1 mRNA and is a constituent of early MT-CO1 assembly intermediates. The sequence is that of Transmembrane protein 223 from Mus musculus (Mouse).